The sequence spans 151 residues: 3-hydroxyacyl-[acyl-carrier-protein] dehydratase FabZ (151 aa).

His-54 is an active-site residue.

Belongs to the thioester dehydratase family. FabZ subfamily. As to quaternary structure, oligomer. The N-terminus is blocked.

The protein resides in the cytoplasm. It catalyses the reaction a (3R)-hydroxyacyl-[ACP] = a (2E)-enoyl-[ACP] + H2O. Involved in unsaturated fatty acids biosynthesis. Catalyzes the dehydration of short chain beta-hydroxyacyl-ACPs and long chain saturated and unsaturated beta-hydroxyacyl-ACPs. In Escherichia coli (strain SE11), this protein is 3-hydroxyacyl-[acyl-carrier-protein] dehydratase FabZ.